A 313-amino-acid chain; its full sequence is Protein FixB (313 aa).

FAD is bound at residue 255 to 283 (LYLAVGISGQIQHMVGANASQTIFAINKD).

The protein belongs to the ETF alpha-subunit/FixB family. Heterodimer of FixA and FixB.

It functions in the pathway amine and polyamine metabolism; carnitine metabolism. Its function is as follows. Required for anaerobic carnitine reduction. May bring reductant to CaiA. This chain is Protein FixB, found in Escherichia coli O7:K1 (strain IAI39 / ExPEC).